Here is a 62-residue protein sequence, read N- to C-terminus: Large ribosomal subunit protein bL28 (62 aa).

The protein belongs to the bacterial ribosomal protein bL28 family.

The protein is Large ribosomal subunit protein bL28 of Desulforamulus reducens (strain ATCC BAA-1160 / DSM 100696 / MI-1) (Desulfotomaculum reducens).